A 394-amino-acid polypeptide reads, in one-letter code: Tubulin-like protein CetZ4 (394 aa).

GTP contacts are provided by residues 10-14 (QAGGK), 110-112 (GTG), glutamate 142, asparagine 169, and asparagine 187.

The protein belongs to the CetZ family.

The protein localises to the cytoplasm. In terms of biological role, involved in cell shape control. The protein is Tubulin-like protein CetZ4 of Haloferax volcanii (strain ATCC 29605 / DSM 3757 / JCM 8879 / NBRC 14742 / NCIMB 2012 / VKM B-1768 / DS2) (Halobacterium volcanii).